The sequence spans 1032 residues: UPF0182 protein sll1060 (1032 aa).

9 consecutive transmembrane segments (helical) span residues 27-49, 69-87, 144-166, 197-219, 226-248, 283-300, 321-339, 364-386, and 406-428; these read WVKG…RIYV, WQGS…FIVF, VLLP…YVFI, FSGM…IGVL, PGLV…FRLL, WWRG…LIIL, HISA…EHWL, LPVE…WLSV, and IIGL…LGGW.

The protein belongs to the UPF0182 family.

It localises to the cell membrane. This Synechocystis sp. (strain ATCC 27184 / PCC 6803 / Kazusa) protein is UPF0182 protein sll1060.